We begin with the raw amino-acid sequence, 426 residues long: UPF0229 protein Csal_0882 (426 aa).

The segment covering 82–93 (FVEGDRLRRPGG) has biased composition (basic and acidic residues). The interval 82–109 (FVEGDRLRRPGGEGRGGSGEGSASNQGE) is disordered.

It belongs to the UPF0229 family.

The protein is UPF0229 protein Csal_0882 of Chromohalobacter salexigens (strain ATCC BAA-138 / DSM 3043 / CIP 106854 / NCIMB 13768 / 1H11).